The primary structure comprises 699 residues: Dymeclin (699 aa).

Glycine 2 carries N-myristoyl glycine lipidation. Serine 346 is modified (phosphoserine).

This sequence belongs to the dymeclin family.

In Drosophila melanogaster (Fruit fly), this protein is Dymeclin.